A 646-amino-acid chain; its full sequence is FAD-binding monooxygenase prhK (646 aa).

The N-linked (GlcNAc...) asparagine glycan is linked to N46. The helical transmembrane segment at 80–97 (IIIIGAGFGGLLFAVRLI) threads the bilayer. FAD is bound by residues 119–122 (TWYW), 131–132 (DT), and Y137. 129–131 (MCD) is an NADP(+) binding site. NADP(+)-binding positions include 275–281 (TGATAIQ) and 298–299 (RT). 3 N-linked (GlcNAc...) asparagine glycosylation sites follow: N429, N483, and N529.

This sequence belongs to the FAD-binding monooxygenase family. FAD serves as cofactor.

Its subcellular location is the membrane. It catalyses the reaction preaustinoid A + AH2 + O2 = preaustinoid A1 + A + H2O. The protein operates within secondary metabolite biosynthesis; terpenoid biosynthesis. FAD-binding monooxygenase; part of the gene cluster that mediates the biosynthesis of paraherquonin, a meroterpenoid with a unique, highly congested hexacyclic molecular architecture. The first step of the pathway is the synthesis of 3,5-dimethylorsellinic acid (DMOA) by the polyketide synthase prhL. Synthesis of DMOA is followed by farnesylation by the prenyltransferase prhE, methylesterification by the methyl-transferase prhM, epoxidation of the prenyl chain by the flavin-dependent monooxygenase prhF, and cyclization of the farnesyl moiety by the terpene cyclase prhH, to yield the tetracyclic intermediate, protoaustinoid A. The short chain dehydrogenase prhI then oxidizes the C-3 alcohol group of the terpene cyclase product to transform protoaustinoid A into protoaustinoid B. The FAD-binding monooxygenase prhJ catalyzes the oxidation of protoaustinoid B into preaustinoid A which is further oxidized into preaustinoid A1 by FAD-binding monooxygenase phrK. Finally, prhA leads to berkeleydione via the berkeleyone B intermediate. PrhA is a multifunctional dioxygenase that first desaturates at C5-C6 to form berkeleyone B, followed by rearrangement of the A/B-ring to form the cycloheptadiene moiety in berkeleydione. Berkeleydione serves as the key intermediate for the biosynthesis of paraherquonin as well as many other meroterpenoids. The cytochrome P450 monooxygenases prhB, prhD, and prhN, as well as the isomerase prhC, are probably involved in the late stage of paraherquonin biosynthesis, after the production of berkeleydione. Especially prhC might be a multifunctional enzyme that catalyzes the D-ring expansion via intramolecular methoxy rearrangement, as well as the hydrolysis of the expanded D-ring. This Penicillium brasilianum protein is FAD-binding monooxygenase prhK.